Here is a 634-residue protein sequence, read N- to C-terminus: DNA-directed RNA polymerase subunit gamma (634 aa).

Positions 74, 76, 89, and 92 each coordinate Zn(2+). Residues aspartate 471, aspartate 473, and aspartate 475 each coordinate Mg(2+).

It belongs to the RNA polymerase beta' chain family. RpoC1 subfamily. In cyanobacteria the RNAP catalytic core is composed of 2 alpha, 1 beta, 1 beta', 1 gamma and 1 omega subunit. When a sigma factor is associated with the core the holoenzyme is formed, which can initiate transcription. Requires Mg(2+) as cofactor. It depends on Zn(2+) as a cofactor.

It carries out the reaction RNA(n) + a ribonucleoside 5'-triphosphate = RNA(n+1) + diphosphate. Its function is as follows. DNA-dependent RNA polymerase catalyzes the transcription of DNA into RNA using the four ribonucleoside triphosphates as substrates. This Prochlorococcus marinus (strain MIT 9303) protein is DNA-directed RNA polymerase subunit gamma.